The sequence spans 453 residues: Carbamoyl phosphate synthase arginine-specific small chain (453 aa).

Residues 1–13 (MFSKLAANFAQRA) constitute a mitochondrion transit peptide. In terms of domain architecture, Glutamine amidotransferase type-1 spans 233–420 (HVALIDCGVK…LENVRAAKSA (188 aa)). Cysteine 309 functions as the Nucleophile in the catalytic mechanism. Catalysis depends on residues histidine 393 and glutamate 395.

The protein belongs to the CarA family. As to quaternary structure, heterodimer composed of 2 chains; the small (or glutamine) chain promotes the hydrolysis of glutamine to ammonia, which is used by the large (or ammonia) chain to synthesize carbamoyl phosphate.

It is found in the mitochondrion matrix. The enzyme catalyses hydrogencarbonate + L-glutamine + 2 ATP + H2O = carbamoyl phosphate + L-glutamate + 2 ADP + phosphate + 2 H(+). The catalysed reaction is L-glutamine + H2O = L-glutamate + NH4(+). It functions in the pathway amino-acid biosynthesis; L-arginine biosynthesis; carbamoyl phosphate from bicarbonate: step 1/1. Small subunit of the arginine-specific carbamoyl phosphate synthase (CPSase). CPSase catalyzes the formation of carbamoyl phosphate from the ammonia moiety of glutamine, carbonate, and phosphate donated by ATP, the first step of the arginine biosynthetic pathway. The small subunit (glutamine amidotransferase) binds and cleaves glutamine to supply the large subunit with the substrate ammonia. The protein is Carbamoyl phosphate synthase arginine-specific small chain (cpa1) of Hypocrea virens (Gliocladium virens).